The sequence spans 343 residues: 4-hydroxyproline 2-epimerase 1 (343 aa).

Ser-90 serves as the catalytic Proton acceptor. Substrate-binding positions include 91–92 (GS), Asp-251, and 256–257 (GT).

It belongs to the proline racemase family.

It catalyses the reaction trans-4-hydroxy-L-proline = cis-4-hydroxy-D-proline. Catalyzes the epimerization of trans-4-hydroxy-L-proline (t4LHyp) to cis-4-hydroxy-D-proline (c4DHyp) in vitro, albeit with low efficiency. The physiological substrate may be different. Displays no proline racemase activity. The sequence is that of 4-hydroxyproline 2-epimerase 1 from Brucella anthropi (strain ATCC 49188 / DSM 6882 / CCUG 24695 / JCM 21032 / LMG 3331 / NBRC 15819 / NCTC 12168 / Alc 37) (Ochrobactrum anthropi).